Reading from the N-terminus, the 362-residue chain is dTDP-glucose 4,6-dehydratase (362 aa).

NAD(+) contacts are provided by residues 11-12 (FI), 32-35 (DKLT), 58-59 (DI), 80-84 (LAAES), and Thr99. Residue Ser84 participates in substrate binding. Thr133 provides a ligand contact to substrate. The active-site Proton donor is Asp134. Active-site proton acceptor residues include Glu135 and Tyr167. 167 to 171 (YSASK) is an NAD(+) binding site. A substrate-binding site is contributed by Asn196. Residue Asn197 participates in NAD(+) binding. Substrate is bound by residues 206-207 (KL), 222-224 (PVY), Arg231, Asn266, and 300-304 (DRPGH).

It belongs to the NAD(P)-dependent epimerase/dehydratase family. dTDP-glucose dehydratase subfamily. NAD(+) is required as a cofactor.

It catalyses the reaction dTDP-alpha-D-glucose = dTDP-4-dehydro-6-deoxy-alpha-D-glucose + H2O. It participates in bacterial outer membrane biogenesis; LPS O-antigen biosynthesis. Catalyzes the dehydration of dTDP-D-glucose to form dTDP-4-dehydro-6-deoxy-D-glucose via a three-step process involving oxidation, dehydration and reduction. This reaction is a step in the biosynthesis of D-fucofuranose, a component of E.coli O52 O antigen. The chain is dTDP-glucose 4,6-dehydratase (rmlB) from Escherichia coli.